Consider the following 523-residue polypeptide: Heparanase (523 aa).

The first 18 residues, 1–18 (MLVLLLLVLLLAVPPRRT), serve as a signal peptide directing secretion. Heparan sulfate group is bound by residues 42–44 (DAS), Thr-77, and 137–141 (KKHKN). 2 N-linked (GlcNAc...) asparagine glycosylation sites follow: Asn-141 and Asn-196. Glu-204 (proton donor) is an active-site residue. Heparan sulfate group contacts are provided by residues 250 to 260 (QPRKHTQHLLR), His-276, and Arg-283. The segment at 268–397 (KAIDSVTWHH…LLYKRLVGTR (130 aa)) is required for heterodimerization with the heparanase 8 kDa subunit. Glu-323 (nucleophile) is an active-site residue. Heparan sulfate group is bound by residues 328–330 (YGG) and 369–371 (GSY). Cysteines 417 and 522 form a disulfide. Residues Asn-436 and Asn-439 are each glycosylated (N-linked (GlcNAc...) asparagine). Residues 507 to 523 (FSYGFYVIRNAKAIACI) form a required for transferring proheparanase to the Golgi apparatus, secretion and subsequent enzyme activity and for enhancement of PKB/AKT1 phosphorylation region.

The protein belongs to the glycosyl hydrolase 79 family. Heterodimer; the active enzyme is a heterodimer of the 60 kDa and 45 kDa proteolytic products. In terms of processing, N-glycosylated. Post-translationally, proteolytically cleaved to produce a 60 kDa and a 45 kDa product.

Its subcellular location is the secreted. The catalysed reaction is endohydrolysis of (1-&gt;4)-beta-D-glycosidic bonds of heparan sulfate chains in heparan sulfate proteoglycan.. Functionally, endoglycosidase that cleaves heparan sulfate proteoglycans (HSPGs) into heparan sulfate side chains and core proteoglycans. Participates in extracellular matrix (ECM) degradation and remodeling. Selectively cleaves the linkage between a glucuronic acid unit and an N-sulfo glucosamine unit carrying either a 3-O-sulfo or a 6-O-sulfo group. Can also cleave the linkage between a glucuronic acid unit and an N-sulfo glucosamine unit carrying a 2-O-sulfo group, but not linkages between a glucuronic acid unit and a 2-O-sulfated iduronic acid moiety. Increases cell adhesion to the extracellular matrix (ECM), independent of its enzymatic activity. This chain is Heparanase (HPSE), found in Gallus gallus (Chicken).